Here is a 380-residue protein sequence, read N- to C-terminus: Sterol 24-C-methyltransferase ERG6B (380 aa).

Belongs to the class I-like SAM-binding methyltransferase superfamily. Erg6/SMT family.

It catalyses the reaction lanosterol + S-adenosyl-L-methionine = eburicol + S-adenosyl-L-homocysteine + H(+). It functions in the pathway steroid metabolism; ergosterol biosynthesis. Functionally, sterol 24-C-methyltransferase; part of the third module of ergosterol biosynthesis pathway that includes the late steps of the pathway. ERG6A and ERG6B methylate lanosterol at C-24 to produce eburicol. The third module or late pathway involves the ergosterol synthesis itself through consecutive reactions that mainly occur in the endoplasmic reticulum (ER) membrane. Firstly, the squalene synthase ERG9 catalyzes the condensation of 2 farnesyl pyrophosphate moieties to form squalene, which is the precursor of all steroids. Squalene synthase is crucial for balancing the incorporation of farnesyl diphosphate (FPP) into sterol and nonsterol isoprene synthesis. Secondly, squalene is converted into lanosterol by the consecutive action of the squalene epoxidase ERG1 and the lanosterol synthase ERG7. Then, the delta(24)-sterol C-methyltransferase ERG6 methylates lanosterol at C-24 to produce eburicol. Eburicol is the substrate of the sterol 14-alpha demethylase encoded by CYP51A, CYP51B and CYP51C, to yield 4,4,24-trimethyl ergosta-8,14,24(28)-trienol. CYP51B encodes the enzyme primarily responsible for sterol 14-alpha-demethylation, and plays an essential role in ascospore formation. CYP51A encodes an additional sterol 14-alpha-demethylase, induced on ergosterol depletion and responsible for the intrinsic variation in azole sensitivity. The third CYP51 isoform, CYP51C, does not encode a sterol 14-alpha-demethylase, but is required for full virulence on host wheat ears. The C-14 reductase ERG24 then reduces the C14=C15 double bond which leads to 4,4-dimethylfecosterol. A sequence of further demethylations at C-4, involving the C-4 demethylation complex containing the C-4 methylsterol oxidases ERG25, the sterol-4-alpha-carboxylate 3-dehydrogenase ERG26 and the 3-keto-steroid reductase ERG27, leads to the production of fecosterol via 4-methylfecosterol. ERG28 has a role as a scaffold to help anchor ERG25, ERG26 and ERG27 to the endoplasmic reticulum. The C-8 sterol isomerase ERG2 then catalyzes the reaction which results in unsaturation at C-7 in the B ring of sterols and thus converts fecosterol to episterol. The sterol-C5-desaturases ERG3A and ERG3BB then catalyze the introduction of a C-5 double bond in the B ring to produce 5-dehydroepisterol. The C-22 sterol desaturases ERG5A and ERG5B further convert 5-dehydroepisterol into ergosta-5,7,22,24(28)-tetraen-3beta-ol by forming the C-22(23) double bond in the sterol side chain. Finally, ergosta-5,7,22,24(28)-tetraen-3beta-ol is substrate of the C-24(28) sterol reductase ERG4 to produce ergosterol. The sequence is that of Sterol 24-C-methyltransferase ERG6B from Gibberella zeae (strain ATCC MYA-4620 / CBS 123657 / FGSC 9075 / NRRL 31084 / PH-1) (Wheat head blight fungus).